Here is a 308-residue protein sequence, read N- to C-terminus: tRNA dimethylallyltransferase (308 aa).

14-21 (GPTASGKT) serves as a coordination point for ATP. Residue 16-21 (TASGKT) coordinates substrate. Interaction with substrate tRNA regions lie at residues 39-42 (DSAL), 163-167 (QRLAR), and 244-249 (RCVGYR).

It belongs to the IPP transferase family. As to quaternary structure, monomer. Mg(2+) serves as cofactor.

It catalyses the reaction adenosine(37) in tRNA + dimethylallyl diphosphate = N(6)-dimethylallyladenosine(37) in tRNA + diphosphate. In terms of biological role, catalyzes the transfer of a dimethylallyl group onto the adenine at position 37 in tRNAs that read codons beginning with uridine, leading to the formation of N6-(dimethylallyl)adenosine (i(6)A). This is tRNA dimethylallyltransferase from Shewanella piezotolerans (strain WP3 / JCM 13877).